A 201-amino-acid chain; its full sequence is Anthranilate synthase component 2 (201 aa).

In terms of domain architecture, Glutamine amidotransferase type-1 spans 1–199 (MLLMIDNYDS…LRQQGGVRGE (199 aa)). 52 to 54 (GPC) is an L-glutamine binding site. Residue C79 is the Nucleophile; for GATase activity of the active site. L-glutamine is bound by residues Q83 and 129–130 (SL). Catalysis depends on for GATase activity residues H173 and E175.

As to quaternary structure, heterotetramer consisting of two non-identical subunits: a beta subunit (TrpG) and a large alpha subunit (TrpE).

It catalyses the reaction chorismate + L-glutamine = anthranilate + pyruvate + L-glutamate + H(+). It participates in amino-acid biosynthesis; L-tryptophan biosynthesis; L-tryptophan from chorismate: step 1/5. Part of a heterotetrameric complex that catalyzes the two-step biosynthesis of anthranilate, an intermediate in the biosynthesis of L-tryptophan. In the first step, the glutamine-binding beta subunit (TrpG) of anthranilate synthase (AS) provides the glutamine amidotransferase activity which generates ammonia as a substrate that, along with chorismate, is used in the second step, catalyzed by the large alpha subunit of AS (TrpE) to produce anthranilate. In the absence of TrpG, TrpE can synthesize anthranilate directly from chorismate and high concentrations of ammonia. This Pseudomonas aeruginosa (strain ATCC 15692 / DSM 22644 / CIP 104116 / JCM 14847 / LMG 12228 / 1C / PRS 101 / PAO1) protein is Anthranilate synthase component 2.